A 265-amino-acid chain; its full sequence is Phosphonates import ATP-binding protein PhnC (265 aa).

Residues 3-247 (LRLKQAFLHH…MLDTLYANEQ (245 aa)) enclose the ABC transporter domain. An ATP-binding site is contributed by 36 to 43 (GPSGAGKS).

Belongs to the ABC transporter superfamily. Phosphonates importer (TC 3.A.1.9.1) family. The complex is composed of two ATP-binding proteins (PhnC), two transmembrane proteins (PhnE) and a solute-binding protein (PhnD).

The protein resides in the cell inner membrane. The enzyme catalyses phosphonate(out) + ATP + H2O = phosphonate(in) + ADP + phosphate + H(+). In terms of biological role, part of the ABC transporter complex PhnCDE involved in phosphonates import. Responsible for energy coupling to the transport system. The chain is Phosphonates import ATP-binding protein PhnC from Pseudomonas fluorescens (strain Pf0-1).